Reading from the N-terminus, the 141-residue chain is Hemoglobin subunit alpha-D (141 aa).

The Globin domain occupies 1–141 (MLTAEDKKLI…VAAVLAEKYR (141 aa)). Residues His58 and His87 each contribute to the heme b site.

The protein belongs to the globin family. Heterotetramer of two alpha-D chains and two beta chains. In terms of tissue distribution, red blood cells.

Involved in oxygen transport from the lung to the various peripheral tissues. The protein is Hemoglobin subunit alpha-D (HBAD) of Accipiter gentilis (Northern goshawk).